A 186-amino-acid polypeptide reads, in one-letter code: Mating-type-like protein ALPHA2 (186 aa).

Residues A108 to Y170 constitute a DNA-binding region (homeobox; TALE-type).

Belongs to the TALE/M-ATYP homeobox family.

It is found in the nucleus. Mating type proteins are sequence specific DNA-binding proteins that act as master switches in yeast differentiation by controlling gene expression in a cell type-specific fashion. This is Mating-type-like protein ALPHA2 (MTL1ALPHA2) from Candida glabrata (strain ATCC 2001 / BCRC 20586 / JCM 3761 / NBRC 0622 / NRRL Y-65 / CBS 138) (Yeast).